We begin with the raw amino-acid sequence, 177 residues long: ATP synthase subunit delta (177 aa).

This sequence belongs to the ATPase delta chain family. In terms of assembly, F-type ATPases have 2 components, F(1) - the catalytic core - and F(0) - the membrane proton channel. F(1) has five subunits: alpha(3), beta(3), gamma(1), delta(1), epsilon(1). F(0) has three main subunits: a(1), b(2) and c(10-14). The alpha and beta chains form an alternating ring which encloses part of the gamma chain. F(1) is attached to F(0) by a central stalk formed by the gamma and epsilon chains, while a peripheral stalk is formed by the delta and b chains.

It localises to the cell inner membrane. Its function is as follows. F(1)F(0) ATP synthase produces ATP from ADP in the presence of a proton or sodium gradient. F-type ATPases consist of two structural domains, F(1) containing the extramembraneous catalytic core and F(0) containing the membrane proton channel, linked together by a central stalk and a peripheral stalk. During catalysis, ATP synthesis in the catalytic domain of F(1) is coupled via a rotary mechanism of the central stalk subunits to proton translocation. Functionally, this protein is part of the stalk that links CF(0) to CF(1). It either transmits conformational changes from CF(0) to CF(1) or is implicated in proton conduction. The chain is ATP synthase subunit delta from Haemophilus influenzae (strain PittGG).